We begin with the raw amino-acid sequence, 239 residues long: Protein Thf1 (239 aa).

The stretch at 183–219 (ERVKKDLELYRSNLDRLKQARAIVEEMVKAARRQQER) forms a coiled coil. Over residues 211 to 221 (KAARRQQERRQ) the composition is skewed to basic and acidic residues. A disordered region spans residues 211–239 (KAARRQQERRQSTASLPETPAADRRESSG).

Belongs to the THF1 family.

Functionally, may be involved in photosynthetic membrane biogenesis. The sequence is that of Protein Thf1 from Synechococcus sp. (strain JA-3-3Ab) (Cyanobacteria bacterium Yellowstone A-Prime).